A 258-amino-acid chain; its full sequence is Imidazole glycerol phosphate synthase subunit HisF (258 aa).

Active-site residues include Asp11 and Asp130.

This sequence belongs to the HisA/HisF family. In terms of assembly, heterodimer of HisH and HisF.

It localises to the cytoplasm. The enzyme catalyses 5-[(5-phospho-1-deoxy-D-ribulos-1-ylimino)methylamino]-1-(5-phospho-beta-D-ribosyl)imidazole-4-carboxamide + L-glutamine = D-erythro-1-(imidazol-4-yl)glycerol 3-phosphate + 5-amino-1-(5-phospho-beta-D-ribosyl)imidazole-4-carboxamide + L-glutamate + H(+). Its pathway is amino-acid biosynthesis; L-histidine biosynthesis; L-histidine from 5-phospho-alpha-D-ribose 1-diphosphate: step 5/9. Functionally, IGPS catalyzes the conversion of PRFAR and glutamine to IGP, AICAR and glutamate. The HisF subunit catalyzes the cyclization activity that produces IGP and AICAR from PRFAR using the ammonia provided by the HisH subunit. The polypeptide is Imidazole glycerol phosphate synthase subunit HisF (Citrobacter koseri (strain ATCC BAA-895 / CDC 4225-83 / SGSC4696)).